A 918-amino-acid chain; its full sequence is DNA ligase 1 (918 aa).

The segment covering 1-15 (MQRSIMSFFQPTTTE) has biased composition (polar residues). The tract at residues 1–271 (MQRSIMSFFQ…DPTNYNPSKS (271 aa)) is disordered. Positions 16 to 54 (GKAKKPEKEIPSSIREKEPPPKVALKERNRAVPESDSPV) are enriched in basic and acidic residues. 4 positions are modified to phosphoserine: Ser50, Ser52, Ser66, and Ser67. The residue at position 78 (Thr78) is a Phosphothreonine. The span at 81–92 (VQKPVSDSKQSS) shows a compositional bias: low complexity. The segment covering 100–114 (PENSPVFNCSPSMDI) has biased composition (polar residues). Positions 120–130 (PKRRTARKQLP) are enriched in basic residues. Lys145 carries the post-translational modification N6-acetyllysine. The residue at position 195 (Thr195) is a Phosphothreonine. At Lys227 the chain carries N6-acetyllysine. Residues Ser230 and Ser231 each carry the phosphoserine modification. The residue at position 234 (Thr234) is a Phosphothreonine. The segment covering 240-259 (VKTEVKQEESDTPRKEETKG) has biased composition (basic and acidic residues). Glu566 is an ATP binding site. The N6-AMP-lysine intermediate role is filled by Lys568. Arg573 and Glu621 together coordinate ATP. Mg(2+) is bound at residue Glu621. Residues 642 to 644 (KRK) are interaction with target DNA. Position 720 (Glu720) interacts with Mg(2+). Lys725 and Lys744 together coordinate ATP. Thr798 is modified (phosphothreonine). Residues Ser801, Ser908, Ser909, and Ser913 each carry the phosphoserine modification. Residues 881-918 (DKQPEQATTSDQVASLYRKQSQIQNQQSSDLDSDVEDY) are disordered. Positions 885–910 (EQATTSDQVASLYRKQSQIQNQQSSD) are enriched in polar residues.

This sequence belongs to the ATP-dependent DNA ligase family. As to quaternary structure, interacts with PCNA. Interacts with POLB. The cofactor is Mg(2+).

The protein localises to the nucleus. The catalysed reaction is ATP + (deoxyribonucleotide)n-3'-hydroxyl + 5'-phospho-(deoxyribonucleotide)m = (deoxyribonucleotide)n+m + AMP + diphosphate.. DNA ligase that seals nicks in double-stranded during DNA repair. Also involved in DNA replication and DNA recombination. The sequence is that of DNA ligase 1 (Lig1) from Rattus norvegicus (Rat).